A 568-amino-acid chain; its full sequence is PCNA-interacting partner (568 aa).

The interval 442-555 (QIPTCVHPAP…RNNKAVSKKL (114 aa)) is disordered. Residues 488-500 (NAWNQTGGKSTQP) show a composition bias toward polar residues. Residues 515-527 (ANRECTEQGREEN) are compositionally biased toward basic and acidic residues.

The protein belongs to the PARI family.

It is found in the cytoplasm. Its subcellular location is the nucleus. Its function is as follows. Required to suppress inappropriate homologous recombination, thereby playing a central role DNA repair and in the maintenance of genomic stability. The protein is PCNA-interacting partner (parpbp) of Danio rerio (Zebrafish).